A 132-amino-acid chain; its full sequence is Agouti-signaling protein (132 aa).

Residues Met1 to Ser22 form the signal peptide. N-linked (GlcNAc...) asparagine glycosylation is present at Asn39. Residues Lys58 to Pro88 form a disordered region. The segment covering Ser63–Met79 has biased composition (basic and acidic residues). Intrachain disulfides connect Cys93-Cys108, Cys100-Cys114, Cys107-Cys125, Cys111-Cys132, and Cys116-Cys123. An Agouti domain is found at Cys93 to Cys132.

Its subcellular location is the secreted. Functionally, involved in the regulation of melanogenesis. The binding of ASP to MC1R precludes alpha-MSH initiated signaling and thus blocks production of cAMP, leading to a down-regulation of eumelanogenesis (brown/black pigment) and thus increasing synthesis of pheomelanin (yellow/red pigment). In Cercopithecus mitis (Blue monkey), this protein is Agouti-signaling protein (ASIP).